A 518-amino-acid polypeptide reads, in one-letter code: MAETSLLEAGASAASTAAALENLQVEASCSVCLEYLKEPVIIECGHNFCKACITRWWEDLERDFPCPVCRKTSRYRSLRPNRQLGSMVEIAKQLQAVKRKIRDESLCPQHHEALSLFCYEDQEAVCLICAISHTHRAHTVVPLDDATQEYKEKLQKCLEPLEQKLQEITRCKSSEEKKPGELKRLVESRRQQILREFEELHRRLDEEQQVLLSRLEEEEQDILQRLRENAAHLGDKRRDLAHLAAEVEGKCLQSGFEMLKDVKSTLEKNIPRKFGGSLSRICPRDHKALLGLVKEINRCEKVKTMEVTSVSIELEKNFSNFPRQYFALRKILKQLIADVTLDPETAHPNLVLSEDRKSVKFVETRLRDLPDTPRRFTFYPCVLATEGFTSGRHYWEVEVGDKTHWAVGVCRDSVSRKGELTPLPETGYWRVRLWNGDKYAATTTPFTPLHIKVKPKRVGIFLDYEAGTLSFYNVTDRSHIYTFTDTFTEKLWPLFYPGIRAGRKNAAPLTIRPPTDWE.

Residues 29–70 (CSVCLEYLKEPVIIECGHNFCKACITRWWEDLERDFPCPVCR) form an RING-type zinc finger. The segment at 102–143 (RDESLCPQHHEALSLFCYEDQEAVCLICAISHTHRAHTVVPL) adopts a B box-type zinc-finger fold. Residues Cys-107, His-110, Cys-129, and His-135 each contribute to the Zn(2+) site. The stretch at 181–250 (ELKRLVESRR…AHLAAEVEGK (70 aa)) forms a coiled coil. Interaction with CDKN1A stretches follow at residues 268–337 (KNIP…QLIA) and 389–518 (TSGR…TDWE). The B30.2/SPRY domain occupies 319-514 (SNFPRQYFAL…NAAPLTIRPP (196 aa)).

Belongs to the TRIM/RBCC family. Interacts with MOAP1. Interacts with CDKN1A. Post-translationally, autoubiquitinated.

It localises to the cytoplasm. The protein resides in the cytosol. The protein localises to the mitochondrion. Its subcellular location is the nucleus. It catalyses the reaction S-ubiquitinyl-[E2 ubiquitin-conjugating enzyme]-L-cysteine + [acceptor protein]-L-lysine = [E2 ubiquitin-conjugating enzyme]-L-cysteine + N(6)-ubiquitinyl-[acceptor protein]-L-lysine.. It functions in the pathway protein modification; protein ubiquitination. E3 ubiquitin-protein ligase. May facilitate apoptosis by inhibiting APC/C-Cdh1-mediated poly-ubiquitination and subsequent proteasome-mediated degradation of the pro-apoptotic protein MOAP1. Regulates the G1/S transition of the cell cycle and DNA damage-induced G2 arrest by stabilizing CDKN1A/p21. Positively regulates CDKN1A/p21 stability by competing with DTL for CDKN1A/p21 binding, therefore disrupting DCX(DTL) E3 ubiquitin ligase complex-mediated CDKN1A/p21 ubiquitination and degradation. This is E3 ubiquitin-protein ligase TRIM39 (TRIM39) from Pan troglodytes (Chimpanzee).